A 1316-amino-acid polypeptide reads, in one-letter code: DNA-directed RNA polymerase subunit beta' (1316 aa).

Zn(2+) is bound by residues Cys60, Cys62, Cys75, and Cys78. The tract at residues 183-209 is disordered; sequence ELEEEGAKSDVRRKVRDGGEREMRQLR. The Mg(2+) site is built by Asp535, Asp537, and Asp539. Zn(2+) is bound by residues Cys890, Cys966, Cys973, and Cys976.

This sequence belongs to the RNA polymerase beta' chain family. The RNAP catalytic core consists of 2 alpha, 1 beta, 1 beta' and 1 omega subunit. When a sigma factor is associated with the core the holoenzyme is formed, which can initiate transcription. Requires Mg(2+) as cofactor. Zn(2+) serves as cofactor.

It carries out the reaction RNA(n) + a ribonucleoside 5'-triphosphate = RNA(n+1) + diphosphate. Functionally, DNA-dependent RNA polymerase catalyzes the transcription of DNA into RNA using the four ribonucleoside triphosphates as substrates. This chain is DNA-directed RNA polymerase subunit beta', found in Mycolicibacterium gilvum (strain PYR-GCK) (Mycobacterium gilvum (strain PYR-GCK)).